Consider the following 388-residue polypeptide: Serine/threonine-protein phosphatase sitA (388 aa).

Mn(2+) is bound by residues Asp-67 and His-69. Residues 86–146 are disordered; the sequence is PDGSEAEAPK…SQRDRSSSSG (61 aa). Residues Asp-161 and Asn-193 each contribute to the Mn(2+) site. His-194 serves as the catalytic Proton donor. Residues His-243 and His-317 each contribute to the Mn(2+) site.

It belongs to the PPP phosphatase family. PP-6 (PP-V) subfamily. Mn(2+) is required as a cofactor.

It catalyses the reaction O-phospho-L-threonyl-[protein] + H2O = L-threonyl-[protein] + phosphate. Protein phosphatase that acts as a modulator of pkcA/mpkA activity involved in the cell wall integrity pathway. Plays an important role in regulation of adhesion, cell wall integrity, biofilm formation, and virulence. In Aspergillus fumigatus (strain ATCC MYA-4609 / CBS 101355 / FGSC A1100 / Af293) (Neosartorya fumigata), this protein is Serine/threonine-protein phosphatase sitA.